Here is a 163-residue protein sequence, read N- to C-terminus: Nucleotide-binding protein APJL_1242 (163 aa).

It belongs to the YajQ family.

Its function is as follows. Nucleotide-binding protein. The chain is Nucleotide-binding protein APJL_1242 from Actinobacillus pleuropneumoniae serotype 3 (strain JL03).